The primary structure comprises 743 residues: Cytosolic neutral trehalase (743 aa).

Ca(2+) is bound by residues aspartate 95, aspartate 97, asparagine 99, glutamine 101, and aspartate 106. Substrate is bound by residues arginine 285, 292–293 (WD), asparagine 329, 338–340 (RSQ), glutamate 405, arginine 454, and glycine 457. Catalysis depends on proton donor/acceptor residues aspartate 459 and glutamate 664.

The protein belongs to the glycosyl hydrolase 37 family. Requires Ca(2+) as cofactor.

It localises to the cytoplasm. The catalysed reaction is alpha,alpha-trehalose + H2O = alpha-D-glucose + beta-D-glucose. It functions in the pathway carbohydrate degradation. Hydrolyzes intracellular trehalose to glucose. The protein is Cytosolic neutral trehalase of Beauveria bassiana (strain ARSEF 2860) (White muscardine disease fungus).